A 99-amino-acid chain; its full sequence is Cysteine-rich C-terminal protein 1 (99 aa).

Disordered stretches follow at residues 1–42 (MSSQ…CCGS) and 65–99 (RRRR…CSGC). Pro residues predominate over residues 22–32 (APCPAPAPTPA). Over residues 83-99 (QRSQRSNNRSSGCCSGC) the composition is skewed to low complexity.

This is Cysteine-rich C-terminal protein 1 (CRCT1) from Homo sapiens (Human).